The chain runs to 291 residues: Acetyl-coenzyme A carboxylase carboxyl transferase subunit beta (291 aa).

Residues 29-291 (IMTKCPQCKK…TGGEREWLEN (263 aa)) form the CoA carboxyltransferase N-terminal domain. Residues cysteine 33, cysteine 36, cysteine 52, and cysteine 55 each contribute to the Zn(2+) site. A C4-type zinc finger spans residues 33-55 (CPQCKKIMLTKELDKNLRVCMNC).

Belongs to the AccD/PCCB family. Acetyl-CoA carboxylase is a heterohexamer composed of biotin carboxyl carrier protein (AccB), biotin carboxylase (AccC) and two subunits each of ACCase subunit alpha (AccA) and ACCase subunit beta (AccD). Zn(2+) is required as a cofactor.

It is found in the cytoplasm. The catalysed reaction is N(6)-carboxybiotinyl-L-lysyl-[protein] + acetyl-CoA = N(6)-biotinyl-L-lysyl-[protein] + malonyl-CoA. It participates in lipid metabolism; malonyl-CoA biosynthesis; malonyl-CoA from acetyl-CoA: step 1/1. Its function is as follows. Component of the acetyl coenzyme A carboxylase (ACC) complex. Biotin carboxylase (BC) catalyzes the carboxylation of biotin on its carrier protein (BCCP) and then the CO(2) group is transferred by the transcarboxylase to acetyl-CoA to form malonyl-CoA. The sequence is that of Acetyl-coenzyme A carboxylase carboxyl transferase subunit beta from Bacillus pumilus (strain SAFR-032).